We begin with the raw amino-acid sequence, 314 residues long: 4-hydroxy-3-methylbut-2-enyl diphosphate reductase (314 aa).

Position 12 (Cys12) interacts with [4Fe-4S] cluster. Residues His41 and His74 each coordinate (2E)-4-hydroxy-3-methylbut-2-enyl diphosphate. 2 residues coordinate dimethylallyl diphosphate: His41 and His74. Isopentenyl diphosphate is bound by residues His41 and His74. [4Fe-4S] cluster is bound at residue Cys96. His124 is a binding site for (2E)-4-hydroxy-3-methylbut-2-enyl diphosphate. His124 is a binding site for dimethylallyl diphosphate. Residue His124 participates in isopentenyl diphosphate binding. Residue Glu126 is the Proton donor of the active site. Thr167 lines the (2E)-4-hydroxy-3-methylbut-2-enyl diphosphate pocket. Cys197 contacts [4Fe-4S] cluster. (2E)-4-hydroxy-3-methylbut-2-enyl diphosphate contacts are provided by Ser225, Ser226, Asn227, and Ser269. Residues Ser225, Ser226, Asn227, and Ser269 each coordinate dimethylallyl diphosphate. The isopentenyl diphosphate site is built by Ser225, Ser226, Asn227, and Ser269.

This sequence belongs to the IspH family. [4Fe-4S] cluster is required as a cofactor.

The enzyme catalyses isopentenyl diphosphate + 2 oxidized [2Fe-2S]-[ferredoxin] + H2O = (2E)-4-hydroxy-3-methylbut-2-enyl diphosphate + 2 reduced [2Fe-2S]-[ferredoxin] + 2 H(+). It carries out the reaction dimethylallyl diphosphate + 2 oxidized [2Fe-2S]-[ferredoxin] + H2O = (2E)-4-hydroxy-3-methylbut-2-enyl diphosphate + 2 reduced [2Fe-2S]-[ferredoxin] + 2 H(+). Its pathway is isoprenoid biosynthesis; dimethylallyl diphosphate biosynthesis; dimethylallyl diphosphate from (2E)-4-hydroxy-3-methylbutenyl diphosphate: step 1/1. It functions in the pathway isoprenoid biosynthesis; isopentenyl diphosphate biosynthesis via DXP pathway; isopentenyl diphosphate from 1-deoxy-D-xylulose 5-phosphate: step 6/6. In terms of biological role, catalyzes the conversion of 1-hydroxy-2-methyl-2-(E)-butenyl 4-diphosphate (HMBPP) into a mixture of isopentenyl diphosphate (IPP) and dimethylallyl diphosphate (DMAPP). Acts in the terminal step of the DOXP/MEP pathway for isoprenoid precursor biosynthesis. This Actinobacillus pleuropneumoniae serotype 3 (strain JL03) protein is 4-hydroxy-3-methylbut-2-enyl diphosphate reductase.